The primary structure comprises 631 residues: Clathrin interactor 1 (631 aa).

The region spanning 24 to 157 (NVVMNYSEIE…QDDDRLREER (134 aa)) is the ENTH domain. Arg37 contributes to the a 1,2-diacyl-sn-glycero-3-phospho-(1D-myo-inositol-4,5-bisphosphate) binding site. Positions 60–62 (FMY) are interaction with VTI1B. Arg75 lines the a 1,2-diacyl-sn-glycero-3-phospho-(1D-myo-inositol-4,5-bisphosphate) pocket. Interaction with VTI1B regions lie at residues 102-104 (SER) and 150-161 (DDRLREERKKAK). Phosphoserine is present on residues Ser171, Ser174, Ser213, Ser218, Ser235, Ser253, and Ser307. Residues 227-339 (FRRKDREDSP…SSGDLVDLFD (113 aa)) form a disordered region. The span at 230 to 247 (KDREDSPERCSDSDEEKK) shows a compositional bias: basic and acidic residues. Positions 308–318 (PDQNASTHTPQ) are enriched in polar residues. Thr316 carries the phosphothreonine modification. Residues 319–331 (SSAKPSVPSSKSS) show a composition bias toward low complexity. Phosphoserine is present on residues Ser320 and Ser630.

Belongs to the epsin family. As to quaternary structure, binds clathrin heavy chain and AP-2. Interacts with VTI1B. Interacts with GGA2 (via GAE domain). Interacts with AP1G1 (via GAE domain). Interacts with AP1G2 (via GAE domain).

The protein localises to the cytoplasm. Its subcellular location is the perinuclear region. It is found in the membrane. The protein resides in the cytoplasmic vesicle. It localises to the clathrin-coated vesicle. Its function is as follows. Binds to membranes enriched in phosphatidylinositol 4,5-bisphosphate (PtdIns(4,5)P2). May have a role in transport via clathrin-coated vesicles from the trans-Golgi network to endosomes. Stimulates clathrin assembly. This Mus musculus (Mouse) protein is Clathrin interactor 1 (Clint1).